A 160-amino-acid polypeptide reads, in one-letter code: Large ribosomal subunit protein uL13 (160 aa).

This sequence belongs to the universal ribosomal protein uL13 family. In terms of assembly, part of the 50S ribosomal subunit.

Functionally, this protein is one of the early assembly proteins of the 50S ribosomal subunit, although it is not seen to bind rRNA by itself. It is important during the early stages of 50S assembly. This Orientia tsutsugamushi (strain Boryong) (Rickettsia tsutsugamushi) protein is Large ribosomal subunit protein uL13.